A 973-amino-acid chain; its full sequence is Mediator of RNA polymerase II transcription subunit 16 (973 aa).

Belongs to the Mediator complex subunit 16 family. Component of the Mediator complex.

Its subcellular location is the nucleus. Functionally, component of the Mediator complex, a coactivator involved in the regulated transcription of nearly all RNA polymerase II-dependent genes. Mediator functions as a bridge to convey information from gene-specific regulatory proteins to the basal RNA polymerase II transcription machinery. Mediator is recruited to promoters by direct interactions with regulatory proteins and serves as a scaffold for the assembly of a functional preinitiation complex with RNA polymerase II and the general transcription factors. In Candida glabrata (strain ATCC 2001 / BCRC 20586 / JCM 3761 / NBRC 0622 / NRRL Y-65 / CBS 138) (Yeast), this protein is Mediator of RNA polymerase II transcription subunit 16 (SIN4).